The primary structure comprises 707 residues: Potassium-transporting ATPase ATP-binding subunit (707 aa).

Basic and acidic residues predominate over residues 1–11; that stretch reads MNTDTQKHEDA. Positions 1 to 37 are disordered; it reads MNTDTQKHEDAMSTTTPARAPHDDAPSGQQPGQGRVG. The next 4 membrane-spanning stretches (helical) occupy residues 61–81, 89–109, 238–258, and 271–291; these read VMAK…TTAF, WFGW…NLAE, IALN…CATL, and MIVL…ALLS. Catalysis depends on D326, which acts as the 4-aspartylphosphate intermediate. Residues D363, E367, 397–404, and K415 each bind ATP; that span reads FTAQTRMS. D542 and D546 together coordinate Mg(2+). Helical transmembrane passes span 612–632, 640–660, and 683–703; these read FAII…LNIM, AILS…PLAL, and LGGL…VSLI.

This sequence belongs to the cation transport ATPase (P-type) (TC 3.A.3) family. Type IA subfamily. In terms of assembly, the system is composed of three essential subunits: KdpA, KdpB and KdpC.

It is found in the cell membrane. It catalyses the reaction K(+)(out) + ATP + H2O = K(+)(in) + ADP + phosphate + H(+). Part of the high-affinity ATP-driven potassium transport (or Kdp) system, which catalyzes the hydrolysis of ATP coupled with the electrogenic transport of potassium into the cytoplasm. This subunit is responsible for energy coupling to the transport system and for the release of the potassium ions to the cytoplasm. The protein is Potassium-transporting ATPase ATP-binding subunit of Streptomyces coelicolor (strain ATCC BAA-471 / A3(2) / M145).